The primary structure comprises 336 residues: UDP-3-O-acylglucosamine N-acyltransferase (336 aa).

The active-site Proton acceptor is the H237.

It belongs to the transferase hexapeptide repeat family. LpxD subfamily. In terms of assembly, homotrimer.

The catalysed reaction is a UDP-3-O-[(3R)-3-hydroxyacyl]-alpha-D-glucosamine + a (3R)-hydroxyacyl-[ACP] = a UDP-2-N,3-O-bis[(3R)-3-hydroxyacyl]-alpha-D-glucosamine + holo-[ACP] + H(+). It participates in bacterial outer membrane biogenesis; LPS lipid A biosynthesis. Its function is as follows. Catalyzes the N-acylation of UDP-3-O-acylglucosamine using 3-hydroxyacyl-ACP as the acyl donor. Is involved in the biosynthesis of lipid A, a phosphorylated glycolipid that anchors the lipopolysaccharide to the outer membrane of the cell. This Alcanivorax borkumensis (strain ATCC 700651 / DSM 11573 / NCIMB 13689 / SK2) protein is UDP-3-O-acylglucosamine N-acyltransferase.